The primary structure comprises 463 residues: Cysteine--tRNA ligase (463 aa).

Cysteine 28 is a Zn(2+) binding site. The short motif at 30–40 (VTIYDLCHIGH) is the 'HIGH' region element. 3 residues coordinate Zn(2+): cysteine 209, histidine 234, and glutamate 238. Residues 266-270 (KMSKS) carry the 'KMSKS' region motif. Position 269 (lysine 269) interacts with ATP.

This sequence belongs to the class-I aminoacyl-tRNA synthetase family. In terms of assembly, monomer. Requires Zn(2+) as cofactor.

The protein resides in the cytoplasm. It carries out the reaction tRNA(Cys) + L-cysteine + ATP = L-cysteinyl-tRNA(Cys) + AMP + diphosphate. This is Cysteine--tRNA ligase from Tolumonas auensis (strain DSM 9187 / NBRC 110442 / TA 4).